The following is a 250-amino-acid chain: Troponin I 1 (250 aa).

Disordered regions lie at residues 1–59 (MSQI…ERKK) and 194–250 (SVFT…ADEE). Basic and acidic residues-rich tracts occupy residues 21–45 (DAQR…EAGQ) and 206–221 (DKPE…KEES). Acidic residues predominate over residues 229-250 (PVEEEETAASEGEEEEEEADEE).

Belongs to the troponin I family. In terms of tissue distribution, strongly expressed in body wall muscle during embryogenesis, reduces during the larval stages to adult. In late-stage larvae and adults, expression is evident in the proximal gonad of both hermaphrodites and males.

In terms of biological role, troponin I is the inhibitory subunit of troponin, the thin filament regulatory complex which confers calcium-sensitivity to muscle actomyosin ATPase activity. This Caenorhabditis elegans protein is Troponin I 1 (tni-1).